A 158-amino-acid polypeptide reads, in one-letter code: Cytochrome c-type biogenesis protein CcmE (158 aa).

The Cytoplasmic segment spans residues 1 to 23 (MNSQSFKNFPSLKFISKKRRKER). The helical; Signal-anchor for type II membrane protein transmembrane segment at 24–44 (LLMVLLCLFIMAITTGLIVYA) threads the bilayer. Residues 45 to 158 (MRNTANFFRT…DRLKKHHDIK (114 aa)) lie on the Periplasmic side of the membrane. 2 residues coordinate heme: His138 and Tyr142.

Belongs to the CcmE/CycJ family.

The protein localises to the cell inner membrane. Its function is as follows. Heme chaperone required for the biogenesis of c-type cytochromes. Transiently binds heme delivered by CcmC and transfers the heme to apo-cytochromes in a process facilitated by CcmF and CcmH. In Bartonella bacilliformis (strain ATCC 35685 / KC583 / Herrer 020/F12,63), this protein is Cytochrome c-type biogenesis protein CcmE.